Here is a 313-residue protein sequence, read N- to C-terminus: T-box protein 37 (313 aa).

Residues 19–195 constitute a DNA-binding region (T-box); sequence IWEKFYPKTE…HNKFASGFRS (177 aa). Residues 193–228 form a disordered region; it reads FRSNGKRRLSSESENSENSPPKRSASAISSLTPPAI.

It localises to the nucleus. In terms of biological role, transcription factor. Required for mesodermal induction, acting redundantly with transcription factor tbx-38. Together with tbx-38, acts by inducing cell fates in the AB lineage, thereby playing a role in development of the anterior pharynx. The protein is T-box protein 37 (tbx-37) of Caenorhabditis elegans.